We begin with the raw amino-acid sequence, 754 residues long: 5-methyltetrahydropteroyltriglutamate--homocysteine methyltransferase (754 aa).

5-methyltetrahydropteroyltri-L-glutamate contacts are provided by residues 15 to 18 (RELK) and Lys-114. L-homocysteine-binding positions include 430–432 (IGS) and Glu-483. L-methionine is bound by residues 430 to 432 (IGS) and Glu-483. 5-methyltetrahydropteroyltri-L-glutamate-binding positions include 514–515 (RC) and Trp-560. Asp-598 lines the L-homocysteine pocket. L-methionine is bound at residue Asp-598. Glu-604 provides a ligand contact to 5-methyltetrahydropteroyltri-L-glutamate. The Zn(2+) site is built by His-641, Cys-643, and Glu-665. His-694 (proton donor) is an active-site residue. Cys-726 is a binding site for Zn(2+).

It belongs to the vitamin-B12 independent methionine synthase family. Requires Zn(2+) as cofactor.

The enzyme catalyses 5-methyltetrahydropteroyltri-L-glutamate + L-homocysteine = tetrahydropteroyltri-L-glutamate + L-methionine. It participates in amino-acid biosynthesis; L-methionine biosynthesis via de novo pathway; L-methionine from L-homocysteine (MetE route): step 1/1. In terms of biological role, catalyzes the transfer of a methyl group from 5-methyltetrahydrofolate to homocysteine resulting in methionine formation. This is 5-methyltetrahydropteroyltriglutamate--homocysteine methyltransferase from Campylobacter jejuni subsp. jejuni serotype O:6 (strain 81116 / NCTC 11828).